The sequence spans 513 residues: ATP synthase subunit alpha (513 aa).

Residue 169 to 176 (GDRQTGKT) coordinates ATP.

This sequence belongs to the ATPase alpha/beta chains family. F-type ATPases have 2 components, CF(1) - the catalytic core - and CF(0) - the membrane proton channel. CF(1) has five subunits: alpha(3), beta(3), gamma(1), delta(1), epsilon(1). CF(0) has three main subunits: a(1), b(2) and c(9-12). The alpha and beta chains form an alternating ring which encloses part of the gamma chain. CF(1) is attached to CF(0) by a central stalk formed by the gamma and epsilon chains, while a peripheral stalk is formed by the delta and b chains.

It is found in the cell inner membrane. The catalysed reaction is ATP + H2O + 4 H(+)(in) = ADP + phosphate + 5 H(+)(out). Produces ATP from ADP in the presence of a proton gradient across the membrane. The alpha chain is a regulatory subunit. This chain is ATP synthase subunit alpha, found in Klebsiella pneumoniae subsp. pneumoniae (strain ATCC 700721 / MGH 78578).